The sequence spans 454 residues: Putative tyrosine kinase 36 (454 aa).

ATP contacts are provided by residues 80-88 and lysine 98; that span reads LGSGSFGKV. Aspartate 192 serves as the catalytic Proton acceptor.

Belongs to the protein kinase superfamily. Tyr protein kinase family.

The enzyme catalyses L-tyrosyl-[protein] + ATP = O-phospho-L-tyrosyl-[protein] + ADP + H(+). The sequence is that of Putative tyrosine kinase 36 (36) from Alcelaphine herpesvirus 1 (strain C500) (AlHV-1).